Reading from the N-terminus, the 602-residue chain is Proteasome-associated ATPase (602 aa).

Over residues 1–17 the composition is skewed to low complexity; it reads MSGPRSGSGSDGSTGRP. The interval 1-31 is disordered; that stretch reads MSGPRSGSGSDGSTGRPGDAESRRSAYEKET. A compositionally biased stretch (basic and acidic residues) spans 18-31; that stretch reads GDAESRRSAYEKET. A coiled-coil region spans residues 19 to 106; sequence DAESRRSAYE…LKEEVDRLAQ (88 aa). 289–294 contacts ATP; the sequence is GCGKTL. The tract at residues 601-602 is docks into pockets in the proteasome alpha-ring; the sequence is YL.

This sequence belongs to the AAA ATPase family. Homohexamer. Assembles into a hexameric ring structure that caps the 20S proteasome core. Strongly interacts with the prokaryotic ubiquitin-like protein Pup through a hydrophobic interface; the interacting region of ARC lies in its N-terminal coiled-coil domain. There is one Pup binding site per ARC hexamer ring. Upon ATP-binding, the C-terminus of ARC interacts with the alpha-rings of the proteasome core, possibly by binding to the intersubunit pockets.

Its pathway is protein degradation; proteasomal Pup-dependent pathway. Functionally, ATPase which is responsible for recognizing, binding, unfolding and translocation of pupylated proteins into the bacterial 20S proteasome core particle. May be essential for opening the gate of the 20S proteasome via an interaction with its C-terminus, thereby allowing substrate entry and access to the site of proteolysis. Thus, the C-termini of the proteasomal ATPase may function like a 'key in a lock' to induce gate opening and therefore regulate proteolysis. The chain is Proteasome-associated ATPase from Frankia casuarinae (strain DSM 45818 / CECT 9043 / HFP020203 / CcI3).